Consider the following 262-residue polypeptide: Lens fiber major intrinsic protein (262 aa).

Residues 1-9 (MRELRSSSF) are Cytoplasmic-facing. A helical transmembrane segment spans residues 10 to 29 (WRAILAEFLGSLLYTLLGLG). The Extracellular portion of the chain corresponds to 30–41 (ASLRWAPGPHGV). Residues 42–59 (LGSALAFGLAQATLVQAL) traverse the membrane as a helical segment. The Cytoplasmic segment spans residues 60 to 61 (GH). Residues 62-77 (VSGGHINPAITLAFLL) constitute an intramembrane region (discontinuously helical). The NPA 1 motif lies at 68 to 70 (NPA). Residues 78-82 (ASQLS) lie on the Cytoplasmic side of the membrane. Residues 83–106 (LPRALGYLLAQLLGALAGAGVLYG) form a helical membrane-spanning segment. Residues 107–127 (VTPAAVRGTLGLSALHPSVGP) lie on the Extracellular side of the membrane. The chain crosses the membrane as a helical span at residues 128-148 (GQGTVVELLLTAQFILCVFAS). At 149–156 (FDDRHDGR) the chain is on the cytoplasmic side. The helical transmembrane segment at 157–175 (PGSAALPVGFSLALGHLFG) threads the bilayer. Residues 176-178 (IPF) are Extracellular-facing. The discontinuously helical intramembrane region spans 179-193 (TGAGMNPARSFAPAV). The NPA 2 motif lies at 184–186 (NPA). At 194 to 200 (ITRNFTN) the chain is on the extracellular side. A helical transmembrane segment spans residues 201–222 (HWVFWAGPLLGAALAALLYELA). Residues 223-262 (LCPRARSMAERLAVLRGEPPAAAPPPEPPAEPLELKTQGL) are Cytoplasmic-facing. An interaction with CALM region spans residues 227 to 237 (ARSMAERLAVL). The segment at 240–262 (EPPAAAPPPEPPAEPLELKTQGL) is disordered. Over residues 243 to 253 (AAAPPPEPPAE) the composition is skewed to pro residues.

It belongs to the MIP/aquaporin (TC 1.A.8) family. Homotetramer; each monomer provides an independent water pore. Two homotetramers on opposing membranes can dimerize, forming a cell-cell junction. Interacts with CALM; the calcium-calmodulin/CALM complex interacts with the cytoplasmic domains of two aquaporins, leading to channel closure. During early stages of lens development, interacts through its C-terminal region with Cx56 and GJA8/Cx45.6. As to expression, major component of lens fiber gap junctions.

Its subcellular location is the cell membrane. It is found in the cell junction. It catalyses the reaction H2O(in) = H2O(out). The water channel activity is inhibited by calcium through calmodulin/CALM. Aquaporins form homotetrameric transmembrane channels, with each monomer independently mediating water transport across the plasma membrane along its osmotic gradient. Specifically expressed in lens fiber cells, this aquaporin is crucial for maintaining lens water homeostasis and transparency. Beyond water permeability, it also acts as a cell-to-cell adhesion molecule, forming thin junctions between lens fiber cells that are essential for maintaining the ordered structure and transparency of the lens. The sequence is that of Lens fiber major intrinsic protein from Gallus gallus (Chicken).